The sequence spans 468 residues: ATP synthase subunit beta (468 aa).

ATP is bound at residue 155 to 162; it reads GGAGVGKT.

This sequence belongs to the ATPase alpha/beta chains family. In terms of assembly, F-type ATPases have 2 components, CF(1) - the catalytic core - and CF(0) - the membrane proton channel. CF(1) has five subunits: alpha(3), beta(3), gamma(1), delta(1), epsilon(1). CF(0) has three main subunits: a(1), b(2) and c(9-12). The alpha and beta chains form an alternating ring which encloses part of the gamma chain. CF(1) is attached to CF(0) by a central stalk formed by the gamma and epsilon chains, while a peripheral stalk is formed by the delta and b chains.

The protein localises to the cell membrane. It carries out the reaction ATP + H2O + 4 H(+)(in) = ADP + phosphate + 5 H(+)(out). In terms of biological role, produces ATP from ADP in the presence of a proton gradient across the membrane. The catalytic sites are hosted primarily by the beta subunits. This is ATP synthase subunit beta from Streptococcus suis (strain 98HAH33).